Here is a 103-residue protein sequence, read N- to C-terminus: MSGRGKGGKGLGKGGAKRHRKILRDNIQGITKPAIRRLARRGGVKRISAMIYEETRGVLKSFLESVIRDAVTYTEHAKRKTVTSLDVVYALKRQGRTLYGFGG.

The span at 1–14 shows a compositional bias: gly residues; sequence MSGRGKGGKGLGKG. The segment at 1-20 is disordered; the sequence is MSGRGKGGKGLGKGGAKRHR. Lys-6 is subject to N6-acetyl-N6-methyllysine; alternate. N6-methyllysine; alternate occurs at positions 6, 9, and 13. Lys-13 bears the N6-acetyl-N6-methyllysine; alternate mark. Residues 17–21 mediate DNA binding; that stretch reads KRHRK. N6-glutaryllysine is present on Lys-92.

This sequence belongs to the histone H4 family. As to quaternary structure, the nucleosome is a histone octamer containing two molecules each of H2A, H2B, H3 and H4 assembled in one H3-H4 heterotetramer and two H2A-H2B heterodimers. The octamer wraps approximately 147 bp of DNA. Post-translationally, glutarylation at Lys-92 (H4K91glu) destabilizes nucleosomes by promoting dissociation of the H2A-H2B dimers from nucleosomes.

It localises to the nucleus. The protein localises to the chromosome. Its function is as follows. Core component of nucleosome. Nucleosomes wrap and compact DNA into chromatin, limiting DNA accessibility to the cellular machineries which require DNA as a template. Histones thereby play a central role in transcription regulation, DNA repair, DNA replication and chromosomal stability. DNA accessibility is regulated via a complex set of post-translational modifications of histones, also called histone code, and nucleosome remodeling. This Emericella nidulans (strain FGSC A4 / ATCC 38163 / CBS 112.46 / NRRL 194 / M139) (Aspergillus nidulans) protein is Histone H4.2 (hhfB).